Reading from the N-terminus, the 207-residue chain is NAD(P)H dehydrogenase (quinone) (207 aa).

A Flavodoxin-like domain is found at 3–194 (VQIIFYSMYG…EMAKFQGRHV (192 aa)). FMN is bound by residues 9-14 (SMYGHI) and 82-84 (TRF). Residue Tyr11 coordinates NAD(+). Substrate is bound at residue Trp102. FMN-binding positions include 117-123 (STATQHG) and His138.

This sequence belongs to the WrbA family. Requires FMN as cofactor.

The enzyme catalyses a quinone + NADH + H(+) = a quinol + NAD(+). It carries out the reaction a quinone + NADPH + H(+) = a quinol + NADP(+). The protein is NAD(P)H dehydrogenase (quinone) of Aromatoleum aromaticum (strain DSM 19018 / LMG 30748 / EbN1) (Azoarcus sp. (strain EbN1)).